A 393-amino-acid polypeptide reads, in one-letter code: Na(+)/H(+) antiporter NhaA 1 (393 aa).

A run of 11 helical transmembrane segments spans residues Ala-23–Phe-43, Leu-58–Leu-78, Met-96–Phe-116, Gly-126–Gly-146, Val-155–Phe-175, Ala-178–Met-198, Gly-224–Pro-244, Val-265–Leu-285, Ile-298–Ile-318, Leu-334–Leu-354, and Ile-367–Val-387.

Belongs to the NhaA Na(+)/H(+) (TC 2.A.33) antiporter family.

It localises to the cell inner membrane. The catalysed reaction is Na(+)(in) + 2 H(+)(out) = Na(+)(out) + 2 H(+)(in). Its function is as follows. Na(+)/H(+) antiporter that extrudes sodium in exchange for external protons. The polypeptide is Na(+)/H(+) antiporter NhaA 1 (Brucella anthropi (strain ATCC 49188 / DSM 6882 / CCUG 24695 / JCM 21032 / LMG 3331 / NBRC 15819 / NCTC 12168 / Alc 37) (Ochrobactrum anthropi)).